The primary structure comprises 84 residues: Cell division topological specificity factor (84 aa).

Belongs to the MinE family.

Prevents the cell division inhibition by proteins MinC and MinD at internal division sites while permitting inhibition at polar sites. This ensures cell division at the proper site by restricting the formation of a division septum at the midpoint of the long axis of the cell. This Paraburkholderia phytofirmans (strain DSM 17436 / LMG 22146 / PsJN) (Burkholderia phytofirmans) protein is Cell division topological specificity factor.